The following is a 38-amino-acid chain: Photosystem II reaction center protein L (38 aa).

The helical transmembrane segment at 17–37 threads the bilayer; that stretch reads SLYWGLLLIFVLAVSFSNYFF.

It belongs to the PsbL family. PSII is composed of 1 copy each of membrane proteins PsbA, PsbB, PsbC, PsbD, PsbE, PsbF, PsbH, PsbI, PsbJ, PsbK, PsbL, PsbM, PsbT, PsbX, PsbY, PsbZ, Psb30/Ycf12, at least 3 peripheral proteins of the oxygen-evolving complex and a large number of cofactors. It forms dimeric complexes.

It localises to the plastid membrane. One of the components of the core complex of photosystem II (PSII). PSII is a light-driven water:plastoquinone oxidoreductase that uses light energy to abstract electrons from H(2)O, generating O(2) and a proton gradient subsequently used for ATP formation. It consists of a core antenna complex that captures photons, and an electron transfer chain that converts photonic excitation into a charge separation. This subunit is found at the monomer-monomer interface and is required for correct PSII assembly and/or dimerization. This Aneura mirabilis (Parasitic liverwort) protein is Photosystem II reaction center protein L.